The chain runs to 1343 residues: Xanthine dehydrogenase (1343 aa).

The 2Fe-2S ferredoxin-type domain occupies 8–95 (SELVFFVNGK…GCAVTTVEGI (88 aa)). [2Fe-2S] cluster contacts are provided by cysteine 47, cysteine 52, cysteine 55, cysteine 77, cysteine 117, cysteine 120, cysteine 152, and cysteine 154. The FAD-binding PCMH-type domain occupies 235–424 (FSSERVTWYR…LGIHFQKTTP (190 aa)). Residues 263–270 (LVVGNTEV), phenylalanine 343, 353–357 (CLGGN), aspartate 366, leucine 414, and lysine 432 each bind FAD. The Mo-molybdopterin site is built by glutamine 780 and phenylalanine 811. Substrate is bound by residues glutamate 815 and arginine 893. Position 925 (arginine 925) interacts with Mo-molybdopterin. Phenylalanine 927 is a substrate binding site. Mo-molybdopterin is bound at residue alanine 1092. Glutamate 1275 (proton acceptor) is an active-site residue.

This sequence belongs to the xanthine dehydrogenase family. Homodimer. FAD serves as cofactor. The cofactor is Mo-molybdopterin. Requires [2Fe-2S] cluster as cofactor.

It is found in the peroxisome. It carries out the reaction xanthine + NAD(+) + H2O = urate + NADH + H(+). The enzyme catalyses hypoxanthine + NAD(+) + H2O = xanthine + NADH + H(+). Its function is as follows. Key enzyme in purine degradation. Catalyzes the oxidation of hypoxanthine to xanthine. Catalyzes the oxidation of xanthine to uric acid. The polypeptide is Xanthine dehydrogenase (ry) (Drosophila pseudoobscura pseudoobscura (Fruit fly)).